Reading from the N-terminus, the 206-residue chain is Small ribosomal subunit protein uS4 (206 aa).

The S4 RNA-binding domain maps to 96–156 (GRLDNVVYRM…EKAKKQSRVK (61 aa)).

Belongs to the universal ribosomal protein uS4 family. As to quaternary structure, part of the 30S ribosomal subunit. Contacts protein S5. The interaction surface between S4 and S5 is involved in control of translational fidelity.

One of the primary rRNA binding proteins, it binds directly to 16S rRNA where it nucleates assembly of the body of the 30S subunit. Functionally, with S5 and S12 plays an important role in translational accuracy. In Salmonella typhi, this protein is Small ribosomal subunit protein uS4.